Here is a 283-residue protein sequence, read N- to C-terminus: Pantothenate synthetase (283 aa).

Residue Met-30–His-37 coordinates ATP. Residue His-37 is the Proton donor of the active site. Gln-61 serves as a coordination point for (R)-pantoate. Gln-61 lines the beta-alanine pocket. Gly-147–Asp-150 contacts ATP. A (R)-pantoate-binding site is contributed by Gln-153. Residues Val-176 and Met-184–Arg-187 each bind ATP.

This sequence belongs to the pantothenate synthetase family. Homodimer.

Its subcellular location is the cytoplasm. It catalyses the reaction (R)-pantoate + beta-alanine + ATP = (R)-pantothenate + AMP + diphosphate + H(+). It functions in the pathway cofactor biosynthesis; (R)-pantothenate biosynthesis; (R)-pantothenate from (R)-pantoate and beta-alanine: step 1/1. Its function is as follows. Catalyzes the condensation of pantoate with beta-alanine in an ATP-dependent reaction via a pantoyl-adenylate intermediate. In Syntrophotalea carbinolica (strain DSM 2380 / NBRC 103641 / GraBd1) (Pelobacter carbinolicus), this protein is Pantothenate synthetase.